The chain runs to 442 residues: uncharacterized protein (442 aa).

Positions Leu-211–Gly-269 are disordered. Residues Ser-221–Asp-240 are compositionally biased toward acidic residues.

Its subcellular location is the virion. This is an uncharacterized protein from Acanthamoeba polyphaga (Amoeba).